A 112-amino-acid chain; its full sequence is Putative pterin-4-alpha-carbinolamine dehydratase (112 aa).

Belongs to the pterin-4-alpha-carbinolamine dehydratase family.

The catalysed reaction is (4aS,6R)-4a-hydroxy-L-erythro-5,6,7,8-tetrahydrobiopterin = (6R)-L-erythro-6,7-dihydrobiopterin + H2O. The chain is Putative pterin-4-alpha-carbinolamine dehydratase from Shewanella oneidensis (strain ATCC 700550 / JCM 31522 / CIP 106686 / LMG 19005 / NCIMB 14063 / MR-1).